The following is a 387-amino-acid chain: Migration and invasion-inhibitory protein (387 aa).

Polar residues predominate over residues 50–59 (NLEMPLSQET). Disordered regions lie at residues 50–80 (NLEM…DPLD) and 133–172 (VSLG…SAVP). Positions 60–69 (SSASSVAPSS) are enriched in low complexity. Over residues 70 to 80 (QDKRHMLDPLD) the composition is skewed to basic and acidic residues. The residue at position 307 (serine 307) is a Phosphoserine.

In terms of assembly, interacts with IGFBP2.

In terms of biological role, inhibits glioma cells invasion and down-regulates adhesion- and motility-associated genes such as NFKB2 and ICAM1. Exhibits opposing effects to IGFBP2 on cell invasion. In Mus musculus (Mouse), this protein is Migration and invasion-inhibitory protein (Miip).